The primary structure comprises 556 residues: Set1/Ash2 histone methyltransferase complex subunit ASH2 (556 aa).

Residues M1–N19 show a composition bias toward polar residues. Residues M1–S27 are disordered. The PHD-type zinc-finger motif lies at A34–S90. The Zn(2+) site is built by C37, C39, C52, C55, H60, C63, C84, and C87. Residues A216–K251 are disordered. Residues S288–K510 form the B30.2/SPRY domain.

As to quaternary structure, core component of several methyltransferase-containing complexes. Component of the SET1C/COMPASS complex, composed at least of the catalytic subunit Set1, wds/WDR5, Wdr82, Rbbp5, ash2, Cfp1/CXXC1, hcf and Dpy-30L1. Component of the MLL3/4 (Histone-lysine N-methyltransferase/demethylase TRR) complex composed at least of the catalytic subunit trr, ash2, Rbbp5, Dpy-30L1, wds, hcf, ptip, Pa1, Utx, Lpt and Ncoa6. Interacts with hcf. Interacts with trr. Interacts (via B30.2/SPRY domain) with sktl; the interaction is direct. As to expression, in larvae and pupae, expressed in imaginal disks, salivary gland and fat body cells. No expression detected in central nervous system (at protein level).

It is found in the nucleus. It localises to the chromosome. In terms of biological role, transcriptional regulator. Regulates a number of genes involved in wing development including activation of net and bs and repression of rho and kni and controls vein-intervein patterning during wing development. Required for correct expression of a number of homeotic genes including Scr in the first leg imaginal disk and Ubx in the third leg imaginal disk and haltere disks. Required for stabilization of the histone-lysine N-methyltransferase trr and for trimethylation of 'Lys-4' of histone H3. Together with sktl probably plays a role in maintenance of transcriptionally active chromatin through down-regulation of histone H1 hyperphosphorylation. The chain is Set1/Ash2 histone methyltransferase complex subunit ASH2 from Drosophila melanogaster (Fruit fly).